The sequence spans 117 residues: RutC family protein HD_0322 (117 aa).

The protein belongs to the RutC family.

This is RutC family protein HD_0322 from Haemophilus ducreyi (strain 35000HP / ATCC 700724).